The chain runs to 1168 residues: Protein VARIATION IN COMPOUND TRIGGERED ROOT growth response (1168 aa).

A TIR domain is found at Trp10–Leu171. Residue Glu85 is part of the active site. One can recognise an NB-ARC domain in the interval Glu187 to Arg452. LRR repeat units lie at residues Thr539–Asp562, Leu606–Phe629, Cys631–Thr653, Leu676–Leu699, Ser701–Ala720, Thr721–Asn744, Leu795–Ser820, Ser839–Leu865, Cys873–Asn896, and Asn1065–Ser1089.

Belongs to the disease resistance NB-LRR family. Part of a nuclear protein complex made of VICTR, PAD4 and EDS1. Interacts (via TIR domain) with PAD4 and EDS1.

The protein localises to the cytoplasm. The protein resides in the nucleus. The enzyme catalyses NAD(+) + H2O = ADP-D-ribose + nicotinamide + H(+). Functionally, disease resistance protein of the TIR-NB-LRR-type. Part of the RPS6 locus that contains a cluster of several paralogous disease resistance (R) genes. Resistance proteins guard the plant against pathogens that contain an appropriate avirulence protein via an indirect interaction with this avirulence protein. That triggers a defense system including the hypersensitive response, which restricts the pathogen growth. Required for [5-(3,4-dichlorophenyl)furan-2-yl]-piperidine-1-ylmethanethione-(DFPM-) induced root growth arrest due to reduced number of meristem cells in the division zone of the primary root and inhibition of abscisic acid- (ABA-) induced stomatal closing. The chain is Protein VARIATION IN COMPOUND TRIGGERED ROOT growth response (VICTR) from Arabidopsis thaliana (Mouse-ear cress).